A 487-amino-acid chain; its full sequence is MAVSVTKEEMDYTIKPEAGASNISTEDWPLLLKNYDKLMVRTGHFTPIPAGCSPLKRDLKSYISSGVINLDKPSNPSSHEVVAWMKRILRAEKTGHSGTLDPKVTGCLIVCIDRATRLVKSQQGAGKEYVCVIRLHDKIPGGEAQFKRALETLTGALFQRPPLISAVKRQLRIRTIHESKLYEFDNDRHLGVFWVSCEAGTYIRTLCVHLGLLLGVGAHMQELRRVRSGAMDENNGLVTLHDVLDAQWMYDNQRDESYLRRVIQPLESLLTTYKRIVVKDSAVNAVCYGAKLMIPGLLRFEAGIEVNEEVVLMTTKGEAIAIGIAQMSTVELSTCDHGVVAKVKRCIMERDLYPRRWGLGPVALEKKKLKSAGKLDKYGRANEDTPAKWKTEYKDYSAPEEASAHAASESTAKEDVAAALTTEQDEAPSSPQSKMDVDETKEEKKRKRHEGETAEERAERKRKKKEKKEKKERRKSKQEKEDSDDSD.

Residue Asp101 is the Nucleophile of the active site. The PUA domain occupies 273–348 (YKRIVVKDSA…VVAKVKRCIM (76 aa)). The span at 400-410 (EEASAHAASES) shows a compositional bias: low complexity. Residues 400–487 (EEASAHAASE…QEKEDSDDSD (88 aa)) are disordered. Basic and acidic residues predominate over residues 435–459 (MDVDETKEEKKRKRHEGETAEERAE). Residues 460–477 (RKRKKKEKKEKKERRKSK) show a composition bias toward basic residues.

It belongs to the pseudouridine synthase TruB family. As to quaternary structure, component of the small nucleolar ribonucleoprotein particles containing H/ACA-type snoRNAs (H/ACA snoRNPs).

The protein resides in the nucleus. It localises to the nucleolus. It catalyses the reaction uridine in 5S rRNA = pseudouridine in 5S rRNA. It carries out the reaction uridine in snRNA = pseudouridine in snRNA. The catalysed reaction is a uridine in mRNA = a pseudouridine in mRNA. Its function is as follows. Catalytic subunit of H/ACA small nucleolar ribonucleoprotein (H/ACA snoRNP) complex, which catalyzes pseudouridylation of rRNA. This involves the isomerization of uridine such that the ribose is subsequently attached to C5, instead of the normal N1. Pseudouridine ('psi') residues may serve to stabilize the conformation of rRNAs and play a central role in ribosomal RNA processing. The H/ACA snoRNP complex also mediates pseudouridylation of other types of RNAs. Catalyzes pseudouridylation at position 93 in U2 snRNA. Also catalyzes pseudouridylation of mRNAs; H/ACA-type snoRNAs probably guide pseudouridylation of mRNAs. The polypeptide is H/ACA ribonucleoprotein complex subunit cbf5 (cbf5) (Aspergillus fumigatus (strain ATCC MYA-4609 / CBS 101355 / FGSC A1100 / Af293) (Neosartorya fumigata)).